A 251-amino-acid chain; its full sequence is 16S rRNA (guanine(1405)-N(7))-methyltransferase (251 aa).

S-adenosyl-L-methionine-binding positions include Tyr-56, 81 to 83 (HAS), Arg-87, Ala-111, Asp-131, 157 to 158 (DV), Phe-173, and Glu-182.

The protein belongs to the methyltransferase superfamily. Aminoglycoside resistance family.

It catalyses the reaction guanosine(1405) in 16S rRNA + S-adenosyl-L-methionine = N(7)-methylguanosine(1405) in 16S rRNA + S-adenosyl-L-homocysteine. In terms of biological role, specifically methylates the N(7) position of guanine 1405 in 16S rRNA. Confers resistance to various aminoglycosides, including kanamycin, tobramycin, amikacin, arbekacin, gentamicin, sisomicin and isepamicin. This chain is 16S rRNA (guanine(1405)-N(7))-methyltransferase (rmtB), found in Serratia marcescens.